The primary structure comprises 418 residues: Gamma-glutamyl phosphate reductase (418 aa).

This sequence belongs to the gamma-glutamyl phosphate reductase family.

The protein localises to the cytoplasm. It catalyses the reaction L-glutamate 5-semialdehyde + phosphate + NADP(+) = L-glutamyl 5-phosphate + NADPH + H(+). It functions in the pathway amino-acid biosynthesis; L-proline biosynthesis; L-glutamate 5-semialdehyde from L-glutamate: step 2/2. Its function is as follows. Catalyzes the NADPH-dependent reduction of L-glutamate 5-phosphate into L-glutamate 5-semialdehyde and phosphate. The product spontaneously undergoes cyclization to form 1-pyrroline-5-carboxylate. The protein is Gamma-glutamyl phosphate reductase of Syntrophotalea carbinolica (strain DSM 2380 / NBRC 103641 / GraBd1) (Pelobacter carbinolicus).